The following is a 119-amino-acid chain: MSINIVTLVGRVGTDPDIKYFESGSVKCRLTLAVNRRSKNDKPDWFTLELWDKTAEVAGNYVRKGSLIGVKGSLKFDSWSDRQTGVNRSTPVIRVDQLELLGSKQDRDGGSSDFAPENF.

Positions 3 to 102 (INIVTLVGRV…IRVDQLELLG (100 aa)) constitute an SSB domain.

In terms of assembly, homotetramer.

In Anabaena variabilis, this protein is Single-stranded DNA-binding protein (ssb1).